The chain runs to 782 residues: Fibrinogen alpha chain (782 aa).

A signal peptide spans 1-19 (MLSLRVACLILSLASTVWT). Residues 68 to 547 (GCRMKGLIDE…KRGRARTMRD (480 aa)) are a coiled coil. Over residues 264-283 (RPGKDGASRGDLPGDSRGDS) the composition is skewed to basic and acidic residues. The tract at residues 264 to 374 (RPGKDGASRG…PATRKEYHTG (111 aa)) is disordered. The residue at position 279 (Ser279) is a Phosphoserine. Residues 311-323 (SGSGSDGNWGSGT) are compositionally biased toward gly residues. 2 stretches are compositionally biased toward low complexity: residues 324–344 (TGSDDTGTWGAGSSRPSSGSG) and 354–364 (GEFSEFGGSSS). Ser326 carries the post-translational modification Phosphoserine. Residues Cys404 and Cys434 are joined by a disulfide bond. Ser470 bears the Phosphoserine mark. Pro499 carries the 4-hydroxyproline; by P4HA1 modification. Residues 522-536 (DEAASEAHQEGDTRT) show a composition bias toward basic and acidic residues. The tract at residues 522–542 (DEAASEAHQEGDTRTTKRGRA) is disordered. Position 526 is a phosphoserine (Ser526). In terms of domain architecture, Fibrinogen C-terminal spans 539-780 (RGRARTMRDC…AVRMKIRPLV (242 aa)). A glycan (N-linked (GlcNAc...) asparagine) is linked at Asn602. Asp707, Asp709, Trp711, and Glu713 together coordinate Ca(2+). An intrachain disulfide couples Cys715 to Cys728.

In terms of assembly, heterohexamer; disulfide linked. Contains 2 sets of 3 non-identical chains (alpha, beta and gamma). The 2 heterotrimers are in head to head conformation with the N-termini in a small central domain. In terms of processing, conversion of fibrinogen to fibrin is triggered by thrombin, which cleaves fibrinopeptides A and B from alpha and beta chains, and thus exposes the N-terminal polymerization sites responsible for the formation of the soft clot. The soft clot is converted into the hard clot by factor XIIIA which catalyzes the epsilon-(gamma-glutamyl)lysine cross-linking between gamma chains (stronger) and between alpha chains (weaker) of different monomers. Forms F13A-mediated cross-links between a glutamine and the epsilon-amino group of a lysine residue, forming fibronectin-fibrinogen heteropolymers. Post-translationally, phosphorylated by FAM20C in the extracellular medium.

The protein localises to the secreted. Functionally, cleaved by the protease thrombin to yield monomers which, together with fibrinogen beta (FGB) and fibrinogen gamma (FGG), polymerize to form an insoluble fibrin matrix. Fibrin has a major function in hemostasis as one of the primary components of blood clots. In addition, functions during the early stages of wound repair to stabilize the lesion and guide cell migration during re-epithelialization. Was originally thought to be essential for platelet aggregation, based on in vitro studies using anticoagulated blood. However, subsequent studies have shown that it is not absolutely required for thrombus formation in vivo. Enhances expression of SELP in activated platelets via an ITGB3-dependent pathway. Maternal fibrinogen is essential for successful pregnancy. Fibrin deposition is also associated with infection, where it protects against IFNG-mediated hemorrhage. May also facilitate the immune response via both innate and T-cell mediated pathways. This chain is Fibrinogen alpha chain (Fga), found in Rattus norvegicus (Rat).